The primary structure comprises 161 residues: Lipoprotein signal peptidase (161 aa).

A run of 4 helical transmembrane segments spans residues Leu-8–Ala-28, Ile-40–Ser-60, Gln-67–Ile-87, and Ile-91–Phe-111. Catalysis depends on residues Asp-122 and Asp-140. The chain crosses the membrane as a helical span at residues Phe-136–Phe-156.

Belongs to the peptidase A8 family.

It localises to the cell inner membrane. It catalyses the reaction Release of signal peptides from bacterial membrane prolipoproteins. Hydrolyzes -Xaa-Yaa-Zaa-|-(S,diacylglyceryl)Cys-, in which Xaa is hydrophobic (preferably Leu), and Yaa (Ala or Ser) and Zaa (Gly or Ala) have small, neutral side chains.. Its pathway is protein modification; lipoprotein biosynthesis (signal peptide cleavage). In terms of biological role, this protein specifically catalyzes the removal of signal peptides from prolipoproteins. The chain is Lipoprotein signal peptidase from Francisella tularensis subsp. novicida (strain U112).